We begin with the raw amino-acid sequence, 68 residues long: Sec-independent protein translocase protein TatA (68 aa).

Residues 1–21 (MGSFSIWHWLIVLAVVLLLFG) traverse the membrane as a helical segment. Residues 42–68 (GMGDDEVASADKSVDGKTVDHKSDEVR) form a disordered region. The span at 53 to 68 (KSVDGKTVDHKSDEVR) shows a compositional bias: basic and acidic residues.

Belongs to the TatA/E family. The Tat system comprises two distinct complexes: a TatABC complex, containing multiple copies of TatA, TatB and TatC subunits, and a separate TatA complex, containing only TatA subunits. Substrates initially bind to the TatABC complex, which probably triggers association of the separate TatA complex to form the active translocon.

It is found in the cell inner membrane. Functionally, part of the twin-arginine translocation (Tat) system that transports large folded proteins containing a characteristic twin-arginine motif in their signal peptide across membranes. TatA could form the protein-conducting channel of the Tat system. The chain is Sec-independent protein translocase protein TatA from Rhizobium meliloti (strain 1021) (Ensifer meliloti).